The sequence spans 205 residues: Guanylate kinase (205 aa).

A Guanylate kinase-like domain is found at Gly-6–Ser-184. Gly-13 to Gly-20 contributes to the ATP binding site.

Belongs to the guanylate kinase family.

The protein resides in the cytoplasm. It catalyses the reaction GMP + ATP = GDP + ADP. In terms of biological role, essential for recycling GMP and indirectly, cGMP. This Clostridioides difficile (strain 630) (Peptoclostridium difficile) protein is Guanylate kinase.